A 339-amino-acid polypeptide reads, in one-letter code: UDP-N-acetylenolpyruvoylglucosamine reductase (339 aa).

One can recognise an FAD-binding PCMH-type domain in the interval 19–189 (VDVQARLFAE…LRVRFKLSRV (171 aa)). Residue Arg166 is part of the active site. The Proton donor role is filled by Ser239. Glu335 is an active-site residue.

It belongs to the MurB family. FAD serves as cofactor.

The protein resides in the cytoplasm. It carries out the reaction UDP-N-acetyl-alpha-D-muramate + NADP(+) = UDP-N-acetyl-3-O-(1-carboxyvinyl)-alpha-D-glucosamine + NADPH + H(+). It functions in the pathway cell wall biogenesis; peptidoglycan biosynthesis. Functionally, cell wall formation. In Pseudomonas syringae pv. syringae (strain B728a), this protein is UDP-N-acetylenolpyruvoylglucosamine reductase.